Here is a 196-residue protein sequence, read N- to C-terminus: DnaA initiator-associating protein DiaA (196 aa).

An SIS domain is found at 34–196; the sequence is LVQSLLNGNK…DNTLFPHQDD (163 aa).

This sequence belongs to the SIS family. DiaA subfamily. In terms of assembly, homotetramer; dimer of dimers.

Its function is as follows. Required for the timely initiation of chromosomal replication via direct interactions with the DnaA initiator protein. The sequence is that of DnaA initiator-associating protein DiaA from Yersinia enterocolitica serotype O:8 / biotype 1B (strain NCTC 13174 / 8081).